The chain runs to 706 residues: DNA ligase (706 aa).

The interval 1–20 (MSATAGTADESGVASAAASA) is disordered. NAD(+) is bound by residues 50-54 (DAEYD), 99-100 (SL), and Glu128. Catalysis depends on Lys130, which acts as the N6-AMP-lysine intermediate. Positions 151, 188, 304, and 328 each coordinate NAD(+). Residues Cys422, Cys425, Cys440, and Cys446 each coordinate Zn(2+). One can recognise a BRCT domain in the interval 604 to 694 (EGPRPLDGVT…VDAASKLAVP (91 aa)).

It belongs to the NAD-dependent DNA ligase family. LigA subfamily. Mg(2+) is required as a cofactor. Requires Mn(2+) as cofactor.

It carries out the reaction NAD(+) + (deoxyribonucleotide)n-3'-hydroxyl + 5'-phospho-(deoxyribonucleotide)m = (deoxyribonucleotide)n+m + AMP + beta-nicotinamide D-nucleotide.. Functionally, DNA ligase that catalyzes the formation of phosphodiester linkages between 5'-phosphoryl and 3'-hydroxyl groups in double-stranded DNA using NAD as a coenzyme and as the energy source for the reaction. It is essential for DNA replication and repair of damaged DNA. The polypeptide is DNA ligase (Frankia casuarinae (strain DSM 45818 / CECT 9043 / HFP020203 / CcI3)).